The chain runs to 214 residues: uncharacterized protein (214 aa).

Helical transmembrane passes span 33–53 (VILF…ILVV), 104–124 (ILGI…SYVL), 132–152 (FIYL…LSAS), 153–173 (GGVL…FGTK), and 186–206 (LLIL…TITF).

Its subcellular location is the cell membrane. This is an uncharacterized protein from Methanocaldococcus jannaschii (strain ATCC 43067 / DSM 2661 / JAL-1 / JCM 10045 / NBRC 100440) (Methanococcus jannaschii).